A 248-amino-acid polypeptide reads, in one-letter code: MNQLTAYTLRLGDNCLVLSQRLGEWCGHAPELEIDLALANIGLDLLGQARNFLSYAAELAGEGDEDTLAFTRDERQFSNLLLVEQPNGNFADTIARQYFIDAWHVALFTRLMESRDPQLAAISAKAIKEARYHLRFSRGWLERLGNGTDVSGQKMQQAINKLWRFTAELFDADEIDIALSEEGIAVDPRTLRAAWEAEVFAGINEATLNVPQEQAYRTGGKKGLHTEHLGPMLAEMQYLQRVLPGQQW.

Residues 76–79 and 177–179 each bind substrate; these read QFSN and IAL.

In terms of assembly, forms a stable heterotetramer (dimer of heterodimers) with PaaA and a stable heterodimer with PaaB.

The protein operates within aromatic compound metabolism; phenylacetate degradation. Its function is as follows. Component of 1,2-phenylacetyl-CoA epoxidase multicomponent enzyme system which catalyzes the reduction of phenylacetyl-CoA (PA-CoA) to form 1,2-epoxyphenylacetyl-CoA. The subunit C may be essential for structural integrity of the alpha subunit. This is 1,2-phenylacetyl-CoA epoxidase, subunit C (paaC) from Escherichia coli (strain K12).